We begin with the raw amino-acid sequence, 907 residues long: Leucine-rich repeat-containing G-protein coupled receptor 5 (907 aa).

The first 21 residues, 1 to 21, serve as a signal peptide directing secretion; it reads MDTSCVHMLLSLLALLQLVAA. Over 22-561 the chain is Extracellular; sequence GSSPGPDAIP…EHLFGSWLIR (540 aa). In terms of domain architecture, LRRNT spans 25-66; the sequence is PGPDAIPRGCPSHCHCELDGRMLLRVDCSDLGLSELPSNLSV. 2 cysteine pairs are disulfide-bonded: C34–C40 and C38–C52. 2 N-linked (GlcNAc...) asparagine glycosylation sites follow: N63 and N77. LRR repeat units lie at residues 67 to 88, 91 to 112, 115 to 136, 139 to 160, 163 to 184, 187 to 208, 211 to 232, 235 to 256, 258 to 279, 282 to 303, 306 to 325, 329 to 350, 353 to 374, 375 to 396, 399 to 420, and 423 to 446; these read FTSY…LLHR, FLEE…AFTG, SLKV…ALQN, SLQS…CFSG, SLRH…AFRS, ALQA…AFGN, SLVV…CFDG, SLET…IKTL, NLKE…AFVG, SLIT…AFQH, ELRT…PHLT, TLES…VCDQ, NLQV…SGCQ, KLQK…TFQQ, NLRS…AFST, and SLIK…HGLT. N208 is a glycosylation site (N-linked (GlcNAc...) asparagine). The cysteines at positions 348 and 373 are disulfide-linked. C479 and C541 are joined by a disulfide. A helical membrane pass occupies residues 562 to 582; the sequence is IGVWTTAVLALSCNALVALTV. The Cytoplasmic segment spans residues 583–593; it reads FRTPLYISSIK. A helical membrane pass occupies residues 594–614; sequence LLIGVIAVVDILMGVSSAVLA. Over 615–638 the chain is Extracellular; it reads AVDAFTFGRFAQHGAWWEDGIGCQ. C637 and C712 form a disulfide bridge. The helical transmembrane segment at 639-659 threads the bilayer; that stretch reads IVGFLSIFASESSIFLLTLAA. Residues 660-682 lie on the Cytoplasmic side of the membrane; it reads LERGFSVKCSSKFEVKAPLFSLR. A helical membrane pass occupies residues 683-703; it reads AIVLLCVLLALTIATIPLLGG. Topologically, residues 704–723 are extracellular; sequence SKYNASPLCLPLPFGEPSTT. A helical transmembrane segment spans residues 724 to 744; it reads GYMVALVLLNSLCFLIMTIAY. Residues 745 to 767 are Cytoplasmic-facing; it reads TKLYCSLEKGELENLWDCSMVKH. The helical transmembrane segment at 768–788 threads the bilayer; that stretch reads IALLLFANCILYCPVAFLSFS. The Extracellular portion of the chain corresponds to 789 to 802; the sequence is SLLNLTFISPDVIK. The N-linked (GlcNAc...) asparagine glycan is linked to N792. A helical transmembrane segment spans residues 803-823; it reads FILLVIVPLPSCLNPLLYIVF. The Cytoplasmic portion of the chain corresponds to 824–907; that stretch reads NPHFKEDMGS…LSSVAFVPCL (84 aa).

This sequence belongs to the G-protein coupled receptor 1 family. Identified in a complex composed of RNF43, LGR5 and RSPO1. Also interacts with other R-spondin ligands, including RSPO2, RSPO3 and RSPO4. Expressed in the intestinal epithelium (at protein level). Expressed in the gonads, the adrenal gland, and in the brain. In the central nervous system expression is restricted to the olfactory bulb. In the adrenal gland detected only in the neural-crest derived chromaffin cells of the medulla, but not in the cells of the adrenal cortex. In the gonads, the expression is high in Graafian follicle, but absent from primary and secondary follicles. In the intestine, exclusively expressed in cycling crypt base columnar cells. Expressed in the lower bulge and secondary germ area of telogen hair follicles and in the lower outer root sheath of anagen hair follicle.

It localises to the cell membrane. The protein resides in the golgi apparatus. Its subcellular location is the trans-Golgi network membrane. In terms of biological role, receptor for R-spondins that potentiates the canonical Wnt signaling pathway and acts as a stem cell marker of the intestinal epithelium and the hair follicle. Upon binding to R-spondins (RSPO1, RSPO2, RSPO3 or RSPO4), associates with phosphorylated LRP6 and frizzled receptors that are activated by extracellular Wnt receptors, triggering the canonical Wnt signaling pathway to increase expression of target genes. In contrast to classical G-protein coupled receptors, does not activate heterotrimeric G-proteins to transduce the signal. Involved in the development and/or maintenance of the adult intestinal stem cells during postembryonic development. The sequence is that of Leucine-rich repeat-containing G-protein coupled receptor 5 (Lgr5) from Mus musculus (Mouse).